The following is a 457-amino-acid chain: Dihydrolipoyl dehydrogenase (457 aa).

FAD is bound by residues 32–40 (EKQYFGGVC), Lys49, and Ala113. Cys40 and Cys45 are oxidised to a cystine. NAD(+) contacts are provided by residues 178-182 (GGGVI), Val235, and 262-265 (SIGR). FAD-binding residues include Asp303 and Ala311. The active-site Proton acceptor is the His437.

It belongs to the class-I pyridine nucleotide-disulfide oxidoreductase family. Homodimer. It depends on FAD as a cofactor.

It localises to the cytoplasm. It catalyses the reaction N(6)-[(R)-dihydrolipoyl]-L-lysyl-[protein] + NAD(+) = N(6)-[(R)-lipoyl]-L-lysyl-[protein] + NADH + H(+). In terms of biological role, lipoamide dehydrogenase is a component of the alpha-ketoacid dehydrogenase complexes. This is Dihydrolipoyl dehydrogenase (pdhD) from Mycoplasma genitalium (strain ATCC 33530 / DSM 19775 / NCTC 10195 / G37) (Mycoplasmoides genitalium).